Here is a 307-residue protein sequence, read N- to C-terminus: UDP-N-acetylenolpyruvoylglucosamine reductase (307 aa).

The region spanning 21 to 183 (RVGGPADLFF…TEVVMEGPPG (163 aa)) is the FAD-binding PCMH-type domain. Residue Arg-163 is part of the active site. The span at 200-209 (EATQPTKDRT) shows a compositional bias: basic and acidic residues. Positions 200–227 (EATQPTKDRTAGSTFRNPAGFSSTGRAD) are disordered. Positions 210-224 (AGSTFRNPAGFSSTG) are enriched in polar residues. The Proton donor role is filled by Ser-212. Residue Glu-294 is part of the active site.

It belongs to the MurB family. Requires FAD as cofactor.

It is found in the cytoplasm. The enzyme catalyses UDP-N-acetyl-alpha-D-muramate + NADP(+) = UDP-N-acetyl-3-O-(1-carboxyvinyl)-alpha-D-glucosamine + NADPH + H(+). The protein operates within cell wall biogenesis; peptidoglycan biosynthesis. Cell wall formation. The chain is UDP-N-acetylenolpyruvoylglucosamine reductase from Dinoroseobacter shibae (strain DSM 16493 / NCIMB 14021 / DFL 12).